The primary structure comprises 245 residues: Small ribosomal subunit protein uS2 (245 aa).

Belongs to the universal ribosomal protein uS2 family.

In Pseudomonas putida (strain GB-1), this protein is Small ribosomal subunit protein uS2.